The chain runs to 174 residues: uncharacterized protein (174 aa).

The 133-residue stretch at 42–174 folds into the N-acetyltransferase domain; that stretch reads SSNKNINLYE…GVKGMFWYPR (133 aa).

It belongs to the acetyltransferase family. Ycf52 subfamily.

It is found in the plastid. It localises to the chloroplast. This is an uncharacterized protein from Pyropia yezoensis (Susabi-nori).